A 384-amino-acid chain; its full sequence is Methylthioribose-1-phosphate isomerase (384 aa).

D255 (proton donor) is an active-site residue.

The protein belongs to the eIF-2B alpha/beta/delta subunits family. MtnA subfamily.

It localises to the cytoplasm. It is found in the nucleus. The catalysed reaction is 5-(methylsulfanyl)-alpha-D-ribose 1-phosphate = 5-(methylsulfanyl)-D-ribulose 1-phosphate. It functions in the pathway amino-acid biosynthesis; L-methionine biosynthesis via salvage pathway; L-methionine from S-methyl-5-thio-alpha-D-ribose 1-phosphate: step 1/6. In terms of biological role, catalyzes the interconversion of methylthioribose-1-phosphate (MTR-1-P) into methylthioribulose-1-phosphate (MTRu-1-P). The protein is Methylthioribose-1-phosphate isomerase (mri1) of Talaromyces stipitatus (strain ATCC 10500 / CBS 375.48 / QM 6759 / NRRL 1006) (Penicillium stipitatum).